The sequence spans 675 residues: Potassium-transporting ATPase ATP-binding subunit (675 aa).

Helical transmembrane passes span 34-54 (IMFV…FPDI), 65-85 (LITI…SEAF), 216-236 (IALF…IVTL), and 245-265 (LILP…TTIG). Catalysis depends on aspartate 304, which acts as the 4-aspartylphosphate intermediate. ATP is bound by residues aspartate 341, glutamate 345, 372 to 379 (FTAETRMS), and lysine 390. The Mg(2+) site is built by aspartate 513 and aspartate 517. 3 helical membrane-spanning segments follow: residues 569-591 (ALTT…ALMM), 611-631 (AIIS…PIAM), and 644-664 (IFIN…FLGI).

It belongs to the cation transport ATPase (P-type) (TC 3.A.3) family. Type IA subfamily. The system is composed of three essential subunits: KdpA, KdpB and KdpC.

Its subcellular location is the cell membrane. The enzyme catalyses K(+)(out) + ATP + H2O = K(+)(in) + ADP + phosphate + H(+). In terms of biological role, part of the high-affinity ATP-driven potassium transport (or Kdp) system, which catalyzes the hydrolysis of ATP coupled with the electrogenic transport of potassium into the cytoplasm. This subunit is responsible for energy coupling to the transport system and for the release of the potassium ions to the cytoplasm. In Staphylococcus aureus (strain MSSA476), this protein is Potassium-transporting ATPase ATP-binding subunit.